Here is a 320-residue protein sequence, read N- to C-terminus: 3-hydroxybenzoate 6-hydroxylase 2 (320 aa).

The interval 1–25 (MRSTNTRSARSRPTKRSVNASATPT) is disordered. The span at 16–25 (RSVNASATPT) shows a compositional bias: polar residues.

Belongs to the 3-hydroxybenzoate 6-hydroxylase family. The cofactor is FAD.

It carries out the reaction 3-hydroxybenzoate + NADH + O2 + H(+) = 2,5-dihydroxybenzoate + NAD(+) + H2O. Its function is as follows. Catalyzes the conversion of 3-hydroxybenzoate to gentisate. The chain is 3-hydroxybenzoate 6-hydroxylase 2 (hbzD) from Aquipseudomonas alcaligenes (Pseudomonas alcaligenes).